Here is an 88-residue protein sequence, read N- to C-terminus: Small ribosomal subunit protein bS20 (88 aa).

The tract at residues 1 to 27 is disordered; the sequence is MANSKSAKKRALQSEKRRQHNASRRSM.

This sequence belongs to the bacterial ribosomal protein bS20 family.

Binds directly to 16S ribosomal RNA. In Shewanella sp. (strain ANA-3), this protein is Small ribosomal subunit protein bS20.